The chain runs to 822 residues: LPS-assembly protein LptD (822 aa).

The first 37 residues, 1 to 37 (MRRASRSPFILSPVAHAVSRLVLCATLGWTYAGSGHA), serve as a signal peptide directing secretion. Residues 38–97 (QVPAPAGGSEVPLGARPPASAPVAAQQETPLKLKSSPALAEEVPNGPGDEGPTFVFGDSV) form a disordered region.

Belongs to the LptD family. In terms of assembly, component of the lipopolysaccharide transport and assembly complex. Interacts with LptE and LptA.

The protein resides in the cell outer membrane. Its function is as follows. Together with LptE, is involved in the assembly of lipopolysaccharide (LPS) at the surface of the outer membrane. The polypeptide is LPS-assembly protein LptD (Polaromonas sp. (strain JS666 / ATCC BAA-500)).